Here is a 106-residue protein sequence, read N- to C-terminus: ATP-dependent Clp protease adapter protein ClpS (106 aa).

Belongs to the ClpS family. In terms of assembly, binds to the N-terminal domain of the chaperone ClpA.

Functionally, involved in the modulation of the specificity of the ClpAP-mediated ATP-dependent protein degradation. This Vibrio atlanticus (strain LGP32) (Vibrio splendidus (strain Mel32)) protein is ATP-dependent Clp protease adapter protein ClpS.